A 100-amino-acid polypeptide reads, in one-letter code: Urease subunit gamma (100 aa).

It belongs to the urease gamma subunit family. Heterotrimer of UreA (gamma), UreB (beta) and UreC (alpha) subunits. Three heterotrimers associate to form the active enzyme.

The protein resides in the cytoplasm. It carries out the reaction urea + 2 H2O + H(+) = hydrogencarbonate + 2 NH4(+). Its pathway is nitrogen metabolism; urea degradation; CO(2) and NH(3) from urea (urease route): step 1/1. This is Urease subunit gamma from Nitrosospira multiformis (strain ATCC 25196 / NCIMB 11849 / C 71).